Reading from the N-terminus, the 387-residue chain is F420-dependent formate dehydrogenase 1 subunit beta (387 aa).

4Fe-4S ferredoxin-type domains lie at 275-298 (TIEE…VCPV) and 326-355 (VRMS…ARIF). 8 residues coordinate [4Fe-4S] cluster: cysteine 286, cysteine 289, cysteine 292, cysteine 296, cysteine 335, cysteine 338, cysteine 341, and cysteine 345. Residues 366–387 (LGYRPGVDDEAPPALGGSCPTQ) form a disordered region.

It belongs to the FrhB family. As to quaternary structure, dimer of an alpha (FdhA1) and a beta (FdhB1) subunit. Requires [4Fe-4S] cluster as cofactor. FAD serves as cofactor. Zn(2+) is required as a cofactor.

The enzyme catalyses oxidized coenzyme F420-(gamma-L-Glu)(n) + formate + 2 H(+) = reduced coenzyme F420-(gamma-L-Glu)(n) + CO2. In terms of biological role, catalyzes the oxidation of formate to carbon dioxide, with coenzyme F420 as the electron acceptor. In vitro can also use methyl viologen as electron acceptor. The chain is F420-dependent formate dehydrogenase 1 subunit beta from Methanococcus maripaludis (strain DSM 14266 / JCM 13030 / NBRC 101832 / S2 / LL).